Consider the following 122-residue polypeptide: MIQKETNLVVADNSGAKKVRCIHVFGGTGRRYAALGDQIIVSIKAAVPGGVVKKKDVCKAVVVRCVKEQRRKDGSYIRFDENAVVLLNAQGEPRGTRIFGPVARELRDRKYMKIVSLAPEVL.

The protein belongs to the universal ribosomal protein uL14 family. Part of the 50S ribosomal subunit. Forms a cluster with proteins L3 and L19. In the 70S ribosome, L14 and L19 interact and together make contacts with the 16S rRNA in bridges B5 and B8.

Its function is as follows. Binds to 23S rRNA. Forms part of two intersubunit bridges in the 70S ribosome. This chain is Large ribosomal subunit protein uL14, found in Chlorobium phaeobacteroides (strain DSM 266 / SMG 266 / 2430).